Here is a 263-residue protein sequence, read N- to C-terminus: Follistatin-related protein 3 (263 aa).

Positions Met-1 to Ser-26 are cleaved as a signal peptide. Residues Gly-36–Gly-107 enclose the TB domain. 13 disulfides stabilise this stretch: Cys-38–Cys-61, Cys-48–Cys-92, Cys-62–Cys-95, Cys-99–Cys-110, Cys-104–Cys-119, Cys-121–Cys-153, Cys-125–Cys-146, Cys-135–Cys-167, Cys-171–Cys-182, Cys-176–Cys-192, Cys-195–Cys-229, Cys-200–Cys-222, and Cys-211–Cys-243. Asn-73 carries N-linked (GlcNAc...) asparagine glycosylation. The Follistatin-like 1 domain maps to Cys-99–Cys-119. The region spanning Leu-113 to Lys-169 is the Kazal-like 1 domain. The region spanning Ser-170 to Val-193 is the Follistatin-like 2 domain. Residues Ser-189–Gly-245 form the Kazal-like 2 domain. Asn-215 carries an N-linked (GlcNAc...) asparagine glycan. The interval Ser-242–Val-263 is disordered. Ser-255 bears the Phosphoserine; by FAM20C mark.

In terms of assembly, interacts with INHBA and INHBB. Interacts with FN1. Interacts with ADAM12. Isoform 2 interacts with MLLT10; the interaction enhances MLLT10 in vitro transcriptional activity and self-association. Interacts with MSTN. Expressed in a wide range of tissues.

Its subcellular location is the secreted. It localises to the nucleus. Its function is as follows. Isoform 1 or the secreted form is a binding and antagonizing protein for members of the TGF-beta family, such as activin, BMP2 and MSTN. Inhibits activin A-, activin B-, BMP2- and MSDT-induced cellular signaling; more effective on activin A than on activin B. Involved in bone formation; inhibits osteoclast differentiation. Involved in hematopoiesis; involved in differentiation of hemopoietic progenitor cells, increases hematopoietic cell adhesion to fibronectin and seems to contribute to the adhesion of hematopoietic precursor cells to the bone marrow stroma. Isoform 2 or the nuclear form is probably involved in transcriptional regulation via interaction with MLLT10. The sequence is that of Follistatin-related protein 3 (FSTL3) from Homo sapiens (Human).